Reading from the N-terminus, the 273-residue chain is Dermonecrotic toxin LapSicTox-alphaIB1b3 (273 aa).

His-5 is an active-site residue. Residues Glu-25 and Asp-27 each coordinate Mg(2+). The active-site Nucleophile is His-41. Disulfide bonds link Cys-45-Cys-51 and Cys-47-Cys-190. Mg(2+) is bound at residue Asp-85. N-linked (GlcNAc...) asparagine glycosylation occurs at Asn-250.

This sequence belongs to the arthropod phospholipase D family. Class II subfamily. The cofactor is Mg(2+). As to expression, expressed by the venom gland.

Its subcellular location is the secreted. It catalyses the reaction an N-(acyl)-sphingosylphosphocholine = an N-(acyl)-sphingosyl-1,3-cyclic phosphate + choline. The enzyme catalyses an N-(acyl)-sphingosylphosphoethanolamine = an N-(acyl)-sphingosyl-1,3-cyclic phosphate + ethanolamine. The catalysed reaction is a 1-acyl-sn-glycero-3-phosphocholine = a 1-acyl-sn-glycero-2,3-cyclic phosphate + choline. It carries out the reaction a 1-acyl-sn-glycero-3-phosphoethanolamine = a 1-acyl-sn-glycero-2,3-cyclic phosphate + ethanolamine. Its function is as follows. Dermonecrotic toxins cleave the phosphodiester linkage between the phosphate and headgroup of certain phospholipids (sphingolipid and lysolipid substrates), forming an alcohol (often choline) and a cyclic phosphate. This toxin acts on sphingomyelin (SM). It may also act on ceramide phosphoethanolamine (CPE), lysophosphatidylcholine (LPC) and lysophosphatidylethanolamine (LPE), but not on lysophosphatidylserine (LPS), and lysophosphatidylglycerol (LPG). It acts by transphosphatidylation, releasing exclusively cyclic phosphate products as second products. Induces dermonecrosis, hemolysis, increased vascular permeability, edema, inflammatory response, and platelet aggregation. In Loxosceles apachea (Apache recluse spider), this protein is Dermonecrotic toxin LapSicTox-alphaIB1b3.